We begin with the raw amino-acid sequence, 778 residues long: Lon protease (778 aa).

Positions Leu6–Ile207 constitute a Lon N-terminal domain. An ATP-binding site is contributed by Gly356–Thr363. A Lon proteolytic domain is found at Glu592 to Glu773. Active-site residues include Ser679 and Lys722.

It belongs to the peptidase S16 family. Homohexamer. Organized in a ring with a central cavity.

The protein localises to the cytoplasm. The enzyme catalyses Hydrolysis of proteins in presence of ATP.. Its function is as follows. ATP-dependent serine protease that mediates the selective degradation of mutant and abnormal proteins as well as certain short-lived regulatory proteins. Required for cellular homeostasis and for survival from DNA damage and developmental changes induced by stress. Degrades polypeptides processively to yield small peptide fragments that are 5 to 10 amino acids long. Binds to DNA in a double-stranded, site-specific manner. This Rickettsia felis (strain ATCC VR-1525 / URRWXCal2) (Rickettsia azadi) protein is Lon protease.